A 141-amino-acid polypeptide reads, in one-letter code: Protein wingless (141 aa).

S3 carries the O-palmitoleoyl serine; by PORCN lipid modification. A compositionally biased stretch (polar residues) spans 40–49 (TDLEAPTQRN). Positions 40–61 (TDLEAPTQRNDAAPHRAPRRER) are disordered. A disulfide bridge connects residues C107 and C122. N108 and N138 each carry an N-linked (GlcNAc...) asparagine glycan.

The protein belongs to the Wnt family. In terms of processing, palmitoleoylated by porcupine. The lipid group functions as a sorting signal, targeting the ligand to polarized vesicles that transport wg to unique sites at the cell surface. Depalmitoleoylated by notum, leading to inhibit Wnt signaling pathway.

The protein resides in the secreted. Its subcellular location is the extracellular space. The protein localises to the extracellular matrix. Its function is as follows. Segment polarity protein. Binds to the frizzled seven-transmembrane receptors. This protein is probably a growth factor. This Manduca sexta (Tobacco hawkmoth) protein is Protein wingless (WG).